Consider the following 499-residue polypeptide: Glycerol kinase (499 aa).

T14 provides a ligand contact to ADP. Residues T14, T15, and S16 each coordinate ATP. T14 lines the sn-glycerol 3-phosphate pocket. R18 is an ADP binding site. Positions 84, 85, 136, and 245 each coordinate sn-glycerol 3-phosphate. Residues R84, E85, Y136, D245, and Q246 each coordinate glycerol. ADP is bound by residues T267 and G310. 4 residues coordinate ATP: T267, G310, Q314, and G411. Residues G411 and N415 each contribute to the ADP site.

Belongs to the FGGY kinase family.

The enzyme catalyses glycerol + ATP = sn-glycerol 3-phosphate + ADP + H(+). It participates in polyol metabolism; glycerol degradation via glycerol kinase pathway; sn-glycerol 3-phosphate from glycerol: step 1/1. Its activity is regulated as follows. Inhibited by fructose 1,6-bisphosphate (FBP). In terms of biological role, key enzyme in the regulation of glycerol uptake and metabolism. Catalyzes the phosphorylation of glycerol to yield sn-glycerol 3-phosphate. This is Glycerol kinase from Nitrosomonas eutropha (strain DSM 101675 / C91 / Nm57).